A 352-amino-acid polypeptide reads, in one-letter code: C-C chemokine receptor type 5 (352 aa).

Over 1 to 30 the chain is Extracellular; sequence MDYQVSSPTYDIDYYTSEPCQKINVKQIAA. Y3 bears the Sulfotyrosine mark. 2 O-linked (GalNAc...) serine glycosylation sites follow: S6 and S7. Sulfotyrosine is present on residues Y10, Y14, and Y15. Disulfide bonds link C20/C269 and C101/C178. A helical membrane pass occupies residues 31–58; that stretch reads RLLPPLYSLVFIFGFVGNILVVLILINC. Residues 59–68 lie on the Cytoplasmic side of the membrane; the sequence is KRLKSMTDIY. The chain crosses the membrane as a helical span at residues 69 to 89; that stretch reads LLNLAISDLLFLLTVPFWAHY. Residues 90–102 are Extracellular-facing; the sequence is AAAQWDFGNTMCQ. Residues 103–124 form a helical membrane-spanning segment; the sequence is LLTGLYFIGFFSGIFFIILLTI. The Cytoplasmic segment spans residues 125–141; the sequence is DRYLAIVHAVFALKART. The chain crosses the membrane as a helical span at residues 142 to 166; the sequence is VTFGVVTSVITWVVAVFASLPGIIF. Residues 167–198 lie on the Extracellular side of the membrane; the sequence is TRSQREGLHYTCSSHFPYSQYQFWKNFQTLKI. A helical membrane pass occupies residues 199 to 218; the sequence is VILGLVLPLLVMVICYSGIL. Residues 219-235 lie on the Cytoplasmic side of the membrane; it reads KTLLRCRNEKKRHRAVR. The chain crosses the membrane as a helical span at residues 236 to 260; that stretch reads LIFTIMIVYFLFWAPYNIVLLLNTF. Residues 261–277 are Extracellular-facing; the sequence is QEFFGLNNCSSSNRLDQ. The chain crosses the membrane as a helical span at residues 278–301; sequence AMQVTETLGMTHCCINPIIYAFVG. Over 302 to 352 the chain is Cytoplasmic; the sequence is EKFRNYLLVFFQKHIAKRFCKCCSIFQQEASERASSVYTRSTGEQEISVGL. S-palmitoyl cysteine attachment occurs at residues C321, C323, and C324. Residues S336, S337, S342, and S349 each carry the phosphoserine; by BARK1 modification.

This sequence belongs to the G-protein coupled receptor 1 family. As to quaternary structure, interacts with PRAF2. Efficient ligand binding to CCL3/MIP-1alpha and CCL4/MIP-1beta requires sulfation, O-glycosylation and sialic acid modifications. Glycosylation on Ser-6 is required for efficient binding of CCL4. Interacts with GRK2. Interacts with ARRB1 and ARRB2. Interacts with CNIH4. Interacts with S100A4; this interaction stimulates T-lymphocyte chemotaxis. In terms of processing, sulfated on at least 2 of the N-terminal tyrosines. Sulfation is required for efficient binding of the chemokines, CCL3 and CCL4. Post-translationally, palmitoylation in the C-terminal is important for cell surface expression. Phosphorylation on serine residues in the C-terminal is stimulated by binding CC chemokines especially by APO-RANTES. In terms of processing, O-glycosylated, but not N-glycosylated. Ser-6 appears to be the major site even if Ser-7 may be also O-glycosylated. Also sialylated glycans present which contribute to chemokine binding. Thr-16 and Ser-17 may also be glycosylated and, if so, with small moieties such as a T-antigen.

The protein resides in the cell membrane. Its function is as follows. Receptor for a number of inflammatory CC-chemokines including CCL3/MIP-1-alpha, CCL4/MIP-1-beta and RANTES and subsequently transduces a signal by increasing the intracellular calcium ion level. May play a role in the control of granulocytic lineage proliferation or differentiation. Participates in T-lymphocyte migration to the infection site by acting as a chemotactic receptor. The polypeptide is C-C chemokine receptor type 5 (CCR5) (Cercocebus galeritus (Tana river mangabey)).